The following is a 503-amino-acid chain: Probable inactive beta-glucosidase 33 (503 aa).

The first 30 residues, 1 to 30 (MATGELALVSSLFIVVVFLLLGAVAREASA), serve as a signal peptide directing secretion. A beta-D-glucoside contacts are provided by residues glutamine 50, histidine 150, and 195–196 (NQ). Cysteine 215 and cysteine 223 are oxidised to a cystine. Asparagine 222 is a glycosylation site (N-linked (GlcNAc...) asparagine). A beta-D-glucoside is bound by residues tyrosine 339 and glutamate 399. Glutamate 399 serves as the catalytic Nucleophile. N-linked (GlcNAc...) asparagine glycosylation is present at asparagine 436. Residues tryptophan 446, 453–454 (EF), and phenylalanine 462 each bind a beta-D-glucoside.

This sequence belongs to the glycosyl hydrolase 1 family.

In Oryza sativa subsp. japonica (Rice), this protein is Probable inactive beta-glucosidase 33 (BGLU33).